The chain runs to 483 residues: Pentatricopeptide repeat-containing protein At5g18950 (483 aa).

9 PPR repeats span residues 144 to 178 (EPTLLEQYVKCLSEEGLVEEAIEVYNVLKDMGISS), 179 to 213 (SVVTCNSVLLGCLKARKLDRFWELHKEMVESEFDS), 218 to 246 (CLIRALCDGGDVSEGYELLKQGLKQGLDP), 247 to 281 (GQYVYAKLISGFCEIGNYACMSEVLHTMIAWNHFP), 282 to 316 (SMYIYQKIIKGLCMNKKQLEAYCIFKNLKDKGYAP), 317 to 351 (DRVVYTTMIRGFCEKGWLGSARKLWFEMIKKGMRP), 352 to 386 (NEFAYNVMIHGHFKRGEISLVEAFYNEMLRNGYGG), 387 to 421 (TMLSCNTMIKGFCSHGKSDEAFEIFKNMSETGVTP), and 422 to 456 (NAITYNALIKGFCKENKVEKGLKLYKELKALGLKP).

It belongs to the PPR family. P subfamily.

The protein is Pentatricopeptide repeat-containing protein At5g18950 of Arabidopsis thaliana (Mouse-ear cress).